The chain runs to 1375 residues: Ubiquitin carboxyl-terminal hydrolase 47 (1375 aa).

K122 carries the post-translational modification N6-acetyllysine. The USP domain occupies 188–564; that stretch reads VGLVNQAMTC…NAYMLIYRLK (377 aa). Residue C197 is the Nucleophile of the active site. Residues 425–452 are disordered; it reads DEKSPQTESCTDSGAENEGSCHSDQMSN. The segment covering 430 to 452 has biased composition (polar residues); the sequence is QTESCTDSGAENEGSCHSDQMSN. H503 (proton acceptor) is an active-site residue. Residue S832 is modified to Phosphoserine. Disordered regions lie at residues 840–859, 880–968, and 983–1024; these read TAYQ…CERV, LKSL…SHSS, and NGLD…ESGK. A compositionally biased stretch (low complexity) spans 882–899; sequence SLSLQQQQDGDNGDSSKS. At S910 the chain carries Phosphoserine. Over residues 912–928 the composition is skewed to basic and acidic residues; that stretch reads LNERDSSASVDNRELEQ. Residues 929–938 show a composition bias toward polar residues; that stretch reads HIQTSDPENF. Phosphoserine is present on S933. A compositionally biased stretch (basic and acidic residues) spans 940–950; that stretch reads SEERSDSDVNN. The segment covering 953 to 968 has biased composition (low complexity); that stretch reads STSSVDSDILSSSHSS. The span at 997–1006 shows a compositional bias: basic and acidic residues; it reads KANEGKKETW. Positions 1007-1020 are enriched in acidic residues; sequence DTAEEDSGTDSEYD. Position 1013 is a phosphoserine (S1013). Residue T1015 is modified to Phosphothreonine. The residue at position 1017 (S1017) is a Phosphoserine.

Belongs to the peptidase C19 family. In terms of assembly, interacts with BTRC and FBXW11. Interacts with POLB. Expressed in skeletal muscle, heart and testis.

It localises to the cytoplasm. The catalysed reaction is Thiol-dependent hydrolysis of ester, thioester, amide, peptide and isopeptide bonds formed by the C-terminal Gly of ubiquitin (a 76-residue protein attached to proteins as an intracellular targeting signal).. In terms of biological role, ubiquitin-specific protease that specifically deubiquitinates monoubiquitinated DNA polymerase beta (POLB), stabilizing POLB thereby playing a role in base-excision repair (BER). Acts as a regulator of cell growth and genome integrity. May also indirectly regulate CDC25A expression at a transcriptional level. In Homo sapiens (Human), this protein is Ubiquitin carboxyl-terminal hydrolase 47 (USP47).